The sequence spans 302 residues: Heme A synthase (302 aa).

The Cytoplasmic segment spans residues Met-1–Lys-6. The helical transmembrane segment at Gly-7–Thr-27 threads the bilayer. Over Lys-28 to Arg-61 the chain is Extracellular. Cys-35 and Cys-42 are joined by a disulfide. Glu-57 is a catalytic residue. A heme o-binding site is contributed by His-60. A helical membrane pass occupies residues Phe-62–Ile-82. At Gly-83–Leu-91 the chain is on the cytoplasmic side. Residues Ala-92–Phe-112 traverse the membrane as a helical segment. At Gly-113–Ala-120 the chain is on the extracellular side. Residues Leu-121–Phe-141 traverse the membrane as a helical segment. His-122 lines the heme o pocket. Over Glu-142–Met-158 the chain is Cytoplasmic. The helical transmembrane segment at Gln-159 to Val-179 threads the bilayer. The Extracellular segment spans residues Arg-180–Trp-208. Residues Cys-188 and Cys-194 are joined by a disulfide bond. Residues Val-209–Val-229 traverse the membrane as a helical segment. His-213 contributes to the heme b binding site. Residues His-230 to Tyr-242 lie on the Cytoplasmic side of the membrane. A helical transmembrane segment spans residues Trp-243–Val-263. The Extracellular portion of the chain corresponds to Tyr-264 to Ala-272. The helical transmembrane segment at Leu-273–Val-293 threads the bilayer. Residue His-275 coordinates heme b. The Cytoplasmic segment spans residues Ala-294–Lys-302.

It belongs to the COX15/CtaA family. Type 1 subfamily. As to quaternary structure, interacts with CtaB. Heme b is required as a cofactor.

It is found in the cell membrane. It catalyses the reaction Fe(II)-heme o + 2 A + H2O = Fe(II)-heme a + 2 AH2. It participates in porphyrin-containing compound metabolism; heme A biosynthesis; heme A from heme O: step 1/1. Functionally, catalyzes the conversion of heme O to heme A by two successive hydroxylations of the methyl group at C8. The first hydroxylation forms heme I, the second hydroxylation results in an unstable dihydroxymethyl group, which spontaneously dehydrates, resulting in the formyl group of heme A. The polypeptide is Heme A synthase (Bacillus licheniformis (strain ATCC 14580 / DSM 13 / JCM 2505 / CCUG 7422 / NBRC 12200 / NCIMB 9375 / NCTC 10341 / NRRL NRS-1264 / Gibson 46)).